A 404-amino-acid polypeptide reads, in one-letter code: Serine/threonine transporter SstT (404 aa).

9 consecutive transmembrane segments (helical) span residues 17–37, 44–64, 75–95, 138–158, 179–199, 212–232, 287–307, 319–339, and 354–374; these read IGIG…VTAI, FVGA…VQAI, MTLI…VAVI, ALAT…GLAL, IVVW…FSTV, LLIL…NPLL, IPLG…VLTL, FLTA…ASGV, and FGIS…VGVI.

This sequence belongs to the dicarboxylate/amino acid:cation symporter (DAACS) (TC 2.A.23) family.

It localises to the cell membrane. It carries out the reaction L-serine(in) + Na(+)(in) = L-serine(out) + Na(+)(out). The catalysed reaction is L-threonine(in) + Na(+)(in) = L-threonine(out) + Na(+)(out). Involved in the import of serine and threonine into the cell, with the concomitant import of sodium (symport system). The chain is Serine/threonine transporter SstT from Streptococcus equi subsp. zooepidemicus (strain H70).